A 322-amino-acid polypeptide reads, in one-letter code: 26S proteasome non-ATPase regulatory subunit 7 (322 aa).

In terms of domain architecture, MPN spans 9 to 144; it reads VVVHPLVLLS…TEAYISVEEV (136 aa). A Glycyl lysine isopeptide (Lys-Gly) (interchain with G-Cter in ubiquitin) cross-link involves residue Lys180. Lys204, Lys214, Lys314, and Lys315 each carry N6-acetyllysine. Residues 281-322 form a disordered region; the sequence is ANRDAEKKEGQEKEDSKKDRKDDKEKEKEKSDVKKEEKKEKK.

The protein belongs to the peptidase M67A family. In terms of assembly, component of the 19S proteasome regulatory particle complex. The 26S proteasome consists of a 20S core particle (CP) and two 19S regulatory subunits (RP). The regulatory particle is made of a lid composed of 9 subunits including PSMD7, a base containing 6 ATPases and few additional components. Within the complex, PSMD7 interacts with subunit PSMD4 through their respective MPN domain. Interacts with TRIM5.

In terms of biological role, component of the 26S proteasome, a multiprotein complex involved in the ATP-dependent degradation of ubiquitinated proteins. This complex plays a key role in the maintenance of protein homeostasis by removing misfolded or damaged proteins, which could impair cellular functions, and by removing proteins whose functions are no longer required. Therefore, the proteasome participates in numerous cellular processes, including cell cycle progression, apoptosis, or DNA damage repair. This Bos taurus (Bovine) protein is 26S proteasome non-ATPase regulatory subunit 7 (PSMD7).